The primary structure comprises 393 residues: Adaptive-response sensory kinase SasA (393 aa).

Positions 171–393 (MLAHDLRSPL…CFHFTLPVFR (223 aa)) constitute a Histidine kinase domain. A Phosphohistidine; by autocatalysis modification is found at His174.

In terms of assembly, homooligomerizes. Interacts with KaiC. Participates in the KaiABC clock complex, whose core is composed of a KaiC homohexamer, 6 KaiB and up to 6 KaiA dimers. SasA and KaiB(fs) compete to bind to KaiC.

The catalysed reaction is ATP + protein L-histidine = ADP + protein N-phospho-L-histidine.. Member of the two-component regulatory system SasA/RpaA involved in genome-wide circadian gene expression. One of several clock output pathways. Participates in the Kai clock protein complex, the main circadian regulator in cyanobacteria, via its interaction with KaiC. KaiC enhances the autophosphorylation activity of SasA, which then transfers its phosphate group to RpaA to activate it. In addition to its output function, recruits fold-shifted KaiB (KaiB(fs)) to KaiC to cooperatively form the KaiB(6):KaiC(6) complex (independent of SasA kinase activity). Required for robustness of the circadian rhythm of gene expression and is involved in clock output, also required for adaptation to light/dark cycles. This is Adaptive-response sensory kinase SasA from Gloeothece citriformis (strain PCC 7424) (Cyanothece sp. (strain PCC 7424)).